Reading from the N-terminus, the 469-residue chain is Flap endonuclease 1-B (469 aa).

Residues 1–103 (MGIKGLTGLL…GVLSKRLERR (103 aa)) are N-domain. D32 is a binding site for Mg(2+). The DNA site is built by R45 and R69. Residues D85, E157, E159, D183, and D185 each contribute to the Mg(2+) site. The I-domain stretch occupies residues 121–257 (DVDRFSRRTV…KSALKLIREY (137 aa)). Position 157 (E157) interacts with DNA. DNA-binding residues include G235 and D237. Residue D237 participates in Mg(2+) binding. The segment at 274–354 (QKAAQAAVES…GGMQIPEEWP (81 aa)) is disordered. Composition is skewed to acidic residues over residues 282–295 (ESDEESEHEEEDEP) and 302–317 (EMPDPVEEDQDGEEEA). Positions 326–342 (PKKKKASSKTKEKRKGK) are enriched in basic residues. Residues 412–420 (QQGRLDGFF) form an interaction with PCNA region. The tract at residues 424–469 (PKEKAAAPAPVGKAKGKGKIDAKAKGTKRKVDEKAESSAGKKPRKK) is disordered. The span at 441–459 (GKIDAKAKGTKRKVDEKAE) shows a compositional bias: basic and acidic residues.

The protein belongs to the XPG/RAD2 endonuclease family. FEN1 subfamily. In terms of assembly, interacts with PCNA. Three molecules of FEN1 bind to one PCNA trimer with each molecule binding to one PCNA monomer. PCNA stimulates the nuclease activity without altering cleavage specificity. The cofactor is Mg(2+). Post-translationally, phosphorylated. Phosphorylation upon DNA damage induces relocalization to the nuclear plasma.

The protein resides in the nucleus. The protein localises to the nucleolus. It localises to the nucleoplasm. Its subcellular location is the mitochondrion. In terms of biological role, structure-specific nuclease with 5'-flap endonuclease and 5'-3' exonuclease activities involved in DNA replication and repair. During DNA replication, cleaves the 5'-overhanging flap structure that is generated by displacement synthesis when DNA polymerase encounters the 5'-end of a downstream Okazaki fragment. It enters the flap from the 5'-end and then tracks to cleave the flap base, leaving a nick for ligation. Also involved in the long patch base excision repair (LP-BER) pathway, by cleaving within the apurinic/apyrimidinic (AP) site-terminated flap. Acts as a genome stabilization factor that prevents flaps from equilibrating into structures that lead to duplications and deletions. Also possesses 5'-3' exonuclease activity on nicked or gapped double-stranded DNA, and exhibits RNase H activity. Also involved in replication and repair of rDNA and in repairing mitochondrial DNA. This Laccaria bicolor (strain S238N-H82 / ATCC MYA-4686) (Bicoloured deceiver) protein is Flap endonuclease 1-B.